A 324-amino-acid chain; its full sequence is Antihemorrhagic factor cHLP-A (324 aa).

An N-terminal signal peptide occupies residues 1-19 (MNSLVALVLLGQIIGSTLS). 2 consecutive Cystatin fetuin-A-type domains span residues 21–130 (QLGP…VKCK) and 141–254 (RNCP…SDCV). Intrachain disulfides connect cysteine 28–cysteine 315, cysteine 85–cysteine 96, cysteine 110–cysteine 129, cysteine 143–cysteine 146, cysteine 205–cysteine 217, and cysteine 230–cysteine 253. Asparagine 204 is a glycosylation site (N-linked (GlcNAc...) asparagine). N-linked (GlcNAc...) asparagine glycosylation is present at asparagine 282.

This sequence belongs to the fetuin family. Homodimer. As to expression, expressed by the liver.

Its subcellular location is the secreted. Functionally, potent inhibitor of hemorrhagic activity but also proteolytic activities. Inhibition occurs by formation of a non-covalent complex between this protein and the proteinases at their metalloproteinase domains. This chain is Antihemorrhagic factor cHLP-A, found in Gloydius brevicauda (Korean slamosa snake).